We begin with the raw amino-acid sequence, 314 residues long: MFKKKMLAASLSVGLIAPLASPIQESRANTNIENIGDGAEVIKRTEDVSSKKWGVTQNVQFDFVKDKKYNKDALIVKMQGFINSRTSFSDVKGRGYELTKRLIWPFQYNIGLTTKDPNVSLINSITLPKTKIETTDVGQTLGYNIGGNFQSAPSIGGNGSFNYSKTISYTQKSYVSEVDKQNSKSVKWGVKANKFVTPDGKKFAHDRYLFVQSPNGPTGSAREYFAPDNQLPPLVQSGFNPSFITTLSHEKGSKLIRVNLKFSYGRNLDITYATLFPRTGIYAERKHNAFVNRNFVVRYKVNWKTHEIKVKGHN.

Positions 1-28 (MFKKKMLAASLSVGLIAPLASPIQESRA) are cleaved as a signal peptide.

Belongs to the aerolysin family. As to quaternary structure, toxicity requires sequential binding and synergistic association of a class S and a class F component which form heterooligomeric complexes. LukE (class S) associates with LukD (class F). LukE can also associate with HlgB.

It localises to the secreted. Part of a bi-component leucotoxin that acts by forming pores in the membrane of the target cells. LukE-LukD is as effective as the Panton-Valentine leucocidin (PVL) for inducing dermonecrosis when injected in the rabbit skin, but not hemolytic and poorly leucotoxic on human blood cells compared to other leucotoxins expressed by S.aureus. The chain is Leucotoxin LukE (lukE) from Staphylococcus aureus.